A 562-amino-acid polypeptide reads, in one-letter code: MCEHKANNKNDGEFVNLKEKNENNHCGNTKSTIADCDDDYSIITLCTKCLSTKTEVNKNKIILDSKALKDSRTKRRSSVNINIDILNNNLNLSPYFDRSQIVQETILMNNDDLEKLYELDKYKLGKGSYGNVVKAINKKTGQAKAIKIIDKKRINNIERLKREILIMKQMDHPNIIKLYEVYEDNEKLYLVLELCTGGELFDKIVKHGSFSEYETYKIMKQIFSALAYCHSKNIIHRDLKPENILYVDSSDDSPIQIIDWGFASKCMNNHNLKSVVGTPYYIAPEILKGKYDKKCDIWSSGVIMYILLCGYPPFNGKNNDDILKKVKKGEFVFDSNYWSKISLDAKELICECLNYNYKERIDVHKIVNHKWFIKFKNYNHITINKHLSKELIEKFKKFHKLCKIKKLAITCIAYQLNKKKFGKMKKTFEAFDHNGDGVLTISEIFQCLKVGDNEIDRDLYYLLKQLDTDGNGLIDYTEFLAACLDHSILEQDAVCRNAFKIFDANGDGIITKDELLNVLSFSNDQMPFSKEIIENVIKEVDANNDGYIDYDEFYKMMSGRQS.

Positions 118–372 (ELDKYKLGKG…VHKIVNHKWF (255 aa)) constitute a Protein kinase domain. ATP-binding positions include 124 to 132 (LGKGSYGNV) and Lys-147. The Proton acceptor role is filled by Asp-238. Residues 394–402 (KFKKFHKLC) carry the J domain autoinhibitory motif motif. The j domain stretch occupies residues 394–429 (KFKKFHKLCKIKKLAITCIAYQLNKKKFGKMKKTFE). The short motif at 403–412 (KIKKLAITCI) is the J domain EF-hand interaction motif element. 4 consecutive EF-hand domains span residues 419-453 (KKFG…VGDN), 454-489 (EIDR…HSIL), 490-525 (EQDA…SNDQ), and 528-562 (FSKE…GRQS). 17 residues coordinate Ca(2+): Asp-432, Asn-434, Asp-436, Glu-443, Asp-467, Asp-469, Asn-471, Glu-478, Asp-503, Asn-505, Asp-507, Glu-514, Asp-541, Asn-543, Asp-545, Tyr-547, and Glu-552.

It belongs to the protein kinase superfamily. Ser/Thr protein kinase family. CDPK subfamily. Mg(2+) serves as cofactor. May be palmitoylated. In terms of processing, autophosphorylated in vitro.

The protein localises to the cytoplasm. The protein resides in the cytoplasmic vesicle. Its subcellular location is the secretory vesicle. It is found in the microneme membrane. It localises to the cell membrane. The enzyme catalyses L-seryl-[protein] + ATP = O-phospho-L-seryl-[protein] + ADP + H(+). It carries out the reaction L-threonyl-[protein] + ATP = O-phospho-L-threonyl-[protein] + ADP + H(+). Its activity is regulated as follows. Activated by calcium. Upon calcium binding to the EF-hand domains, the C-terminus of the junction domain (J domain) undergoes a conformational change which results in the dissociation of the pseudo-substrate inhibitory motif from the catalytic domain. This, in turn, may facilitate the autophosphorylation of the activation loop at Thr-278, which leads to the kinase activation. Its function is as follows. Calcium-dependent protein kinase which acts as a sensor and effector of intracellular Ca(2+) levels probably in part downstream of cGMP-activated PKG kinase. Plays a central role in host erythrocytes and hepatocytes infection cycles. During the liver stage, involved in sporozoite motility and thus in sporozoite invasion of host hepatocytes, probably together with CDPK1 and CDPK4. Involved in merosome egress from host hepatocytes, probably together with CDPK4. Required for the release of hepatic merozoites from merosomes in the host blood stream. During the asexual blood stage, required for merozoite egress from host erythrocytes by triggering microneme secretion. Phosphorylates transporter NPT1 at late schizont stage. The polypeptide is Calcium-dependent protein kinase 5 (Plasmodium berghei (strain Anka)).